The sequence spans 504 residues: Sodium-coupled neutral amino acid symporter 2 (504 aa).

A disordered region spans residues 1–22 (MKKTEMGRFNISPDEDSSSYSS). At 1-76 (MKKTEMGRFN…HPGTTSFGMS (76 aa)) the chain is on the cytoplasmic side. Residues 1–96 (MKKTEMGRFN…SGILGLSYAM (96 aa)) form a regulates protein turnover upon amino acid deprivation region. Phosphoserine occurs at positions 12, 21, 22, and 55. A helical transmembrane segment spans residues 77–96 (VFNLSNAIVGSGILGLSYAM). Asn-82 contacts Na(+). Over 97–102 (ANTGIA) the chain is Extracellular. Residues 103–123 (LFIILLTFVSIFSLYSVHLLL) traverse the membrane as a helical segment. Residues 124-158 (KTANEGGSLLYEQLGHKAYGLAGKLAASGSITMQN) lie on the Cytoplasmic side of the membrane. A helical membrane pass occupies residues 159 to 177 (IGAMSSYLFIVKYELPLVI). Residues 178–188 (KALMNIEDTNG) are Extracellular-facing. The helical transmembrane segment at 189 to 209 (LWYLNGDYLVLLVSFVLILPL) threads the bilayer. The Cytoplasmic portion of the chain corresponds to 210 to 217 (SLLRNLGY). A helical membrane pass occupies residues 218–238 (LGYTSGLSLLCMIFFLIVVIC). Residues 239 to 290 (KKFQIPCPVEVALMANETVNGTFTQVALAALASNSTAADTCRPRYFIFNSQT) are Extracellular-facing. Cysteines 245 and 279 form a disulfide. 3 N-linked (GlcNAc...) asparagine glycosylation sites follow: Asn-254, Asn-258, and Asn-272. The chain crosses the membrane as a helical span at residues 291 to 311 (VYAVPILTFSFVCHPAVLPIY). Residues 312–327 (EELKSRSRRRMMNVSK) are Cytoplasmic-facing. A helical transmembrane segment spans residues 328-348 (ISFFAMFLMYLLAALFGYLTF). At 349–369 (YEHVESELLHTYSAIVGTDIL) the chain is on the extracellular side. The helical transmembrane segment at 370–390 (LLVVRLAVLVAVTLTVPVVIF) threads the bilayer. Thr-384 serves as a coordination point for Na(+). Residues 391-411 (PIRSSVTHLLCPTKEFSWFRH) lie on the Cytoplasmic side of the membrane. Residues 412 to 432 (SVITVTILAFTNLLVIFVPTI) form a helical membrane-spanning segment. Over 433-434 (RD) the chain is Extracellular. The helical transmembrane segment at 435 to 455 (IFGFIGASAAAMLIFILPSAF) threads the bilayer. Residues 456–470 (YIKLVKKEPMRSVQK) lie on the Cytoplasmic side of the membrane. The helical transmembrane segment at 471 to 493 (IGALCFLLSGVVVMIGSMGLIVL) threads the bilayer. Over 494–504 (DWVHDASAGGH) the chain is Extracellular.

The protein belongs to the amino acid/polyamine transporter 2 family. In terms of processing, polyubiquitination by NEDD4L regulates the degradation and the activity of SLC38A2. In terms of tissue distribution, widely expressed. Expressed in skeletal muscle and adipose tissue (at protein level). Expressed by glutamatergic and GABAergic neurons together with astrocytes and other non-neuronal cells in the cerebral cortex (at protein level). Widely expressed in the central nervous systeme where, it is enriched in the spinal cord and the brainstem nuclei, especially those of the auditory system.

The protein resides in the cell membrane. The enzyme catalyses L-alanine(in) + Na(+)(in) = L-alanine(out) + Na(+)(out). It catalyses the reaction glycine(in) + Na(+)(in) = glycine(out) + Na(+)(out). The catalysed reaction is L-serine(in) + Na(+)(in) = L-serine(out) + Na(+)(out). It carries out the reaction L-proline(in) + Na(+)(in) = L-proline(out) + Na(+)(out). The enzyme catalyses L-methionine(in) + Na(+)(in) = L-methionine(out) + Na(+)(out). It catalyses the reaction L-histidine(in) + Na(+)(in) = L-histidine(out) + Na(+)(out). The catalysed reaction is L-asparagine(in) + Na(+)(in) = L-asparagine(out) + Na(+)(out). It carries out the reaction L-glutamine(in) + Na(+)(in) = L-glutamine(out) + Na(+)(out). The enzyme catalyses L-threonine(in) + Na(+)(in) = L-threonine(out) + Na(+)(out). It catalyses the reaction L-leucine(in) + Na(+)(in) = L-leucine(out) + Na(+)(out). The catalysed reaction is L-phenylalanine(in) + Na(+)(in) = L-phenylalanine(out) + Na(+)(out). Inhibited by N-methyl-D-glucamine. Inhibited by choline. Allosteric regulation of sodium ions binding by pH. Symporter that cotransports neutral amino acids and sodium ions from the extracellular to the intracellular side of the cell membrane. The transport is pH-sensitive, Li(+)-intolerant, electrogenic, driven by the Na(+) electrochemical gradient and cotransports of neutral amino acids and sodium ions with a stoichiometry of 1:1. May function in the transport of amino acids at the blood-brain barrier. May function in the transport of amino acids in the supply of maternal nutrients to the fetus through the placenta. Maintains a key metabolic glutamine/glutamate balance underpinning retrograde signaling by dendritic release of the neurotransmitter glutamate. Transports L-proline in differentiating osteoblasts for the efficient synthesis of proline-enriched proteins and provides proline essential for osteoblast differentiation and bone formation during bone development. In Rattus norvegicus (Rat), this protein is Sodium-coupled neutral amino acid symporter 2.